Here is a 478-residue protein sequence, read N- to C-terminus: Pyruvate kinase (478 aa).

Arg-35 contacts substrate. K(+) contacts are provided by Asn-37, Ser-39, and Asp-69. Position 37–40 (37–40 (NMSH)) interacts with ATP. Arg-76 and Lys-157 together coordinate ATP. Residue Glu-219 coordinates Mg(2+). Substrate-binding residues include Gly-242, Asp-243, and Thr-275. Mg(2+) is bound at residue Asp-243.

The protein belongs to the pyruvate kinase family. Homotetramer. Requires Mg(2+) as cofactor. It depends on K(+) as a cofactor.

The catalysed reaction is pyruvate + ATP = phosphoenolpyruvate + ADP + H(+). It functions in the pathway carbohydrate degradation; glycolysis; pyruvate from D-glyceraldehyde 3-phosphate: step 5/5. In Methylorubrum extorquens (strain ATCC 14718 / DSM 1338 / JCM 2805 / NCIMB 9133 / AM1) (Methylobacterium extorquens), this protein is Pyruvate kinase (pyk).